We begin with the raw amino-acid sequence, 348 residues long: Cyclin-dependent kinase inhibitor 1C (348 aa).

R109 carries the post-translational modification Omega-N-methylarginine. Positions 115–348 (VAVIPRSGPP…VEQTPRKRLR (234 aa)) are disordered. Acidic residues-rich tracts occupy residues 207–220 (QGEESGAEPGDELG) and 227–274 (QGEE…QDEN). Over residues 275–284 (QEQRGQELKD) the composition is skewed to basic and acidic residues. The Nuclear localization signal motif lies at 309–312 (KRKR).

Belongs to the CDI family. As to quaternary structure, interacts with PCNA. In terms of tissue distribution, expressed in the heart, brain, lung, skeletal muscle, kidney, pancreas and testis. High levels are seen in the placenta while low levels are seen in the liver.

The protein localises to the nucleus. In terms of biological role, potent tight-binding inhibitor of several G1 cyclin/CDK complexes (cyclin E-CDK2, cyclin D2-CDK4, and cyclin A-CDK2) and, to lesser extent, of the mitotic cyclin B-CDC2. Negative regulator of cell proliferation. May play a role in maintenance of the non-proliferative state throughout life. The polypeptide is Cyclin-dependent kinase inhibitor 1C (Cdkn1c) (Mus musculus (Mouse)).